Here is a 298-residue protein sequence, read N- to C-terminus: Acetylglutamate kinase (298 aa).

Substrate contacts are provided by residues 69–70 (GG), R91, and N196.

The protein belongs to the acetylglutamate kinase family. ArgB subfamily.

Its subcellular location is the cytoplasm. The enzyme catalyses N-acetyl-L-glutamate + ATP = N-acetyl-L-glutamyl 5-phosphate + ADP. The protein operates within amino-acid biosynthesis; L-arginine biosynthesis; N(2)-acetyl-L-ornithine from L-glutamate: step 2/4. Functionally, catalyzes the ATP-dependent phosphorylation of N-acetyl-L-glutamate. The chain is Acetylglutamate kinase from Rhodopseudomonas palustris (strain BisB18).